A 496-amino-acid polypeptide reads, in one-letter code: Probable cytosol aminopeptidase (496 aa).

Mn(2+) is bound by residues Lys-251 and Asp-256. Lys-263 is an active-site residue. Mn(2+) is bound by residues Asp-274, Asp-333, and Glu-335. Arg-337 is an active-site residue.

Belongs to the peptidase M17 family. Requires Mn(2+) as cofactor.

It is found in the cytoplasm. The enzyme catalyses Release of an N-terminal amino acid, Xaa-|-Yaa-, in which Xaa is preferably Leu, but may be other amino acids including Pro although not Arg or Lys, and Yaa may be Pro. Amino acid amides and methyl esters are also readily hydrolyzed, but rates on arylamides are exceedingly low.. It catalyses the reaction Release of an N-terminal amino acid, preferentially leucine, but not glutamic or aspartic acids.. Functionally, presumably involved in the processing and regular turnover of intracellular proteins. Catalyzes the removal of unsubstituted N-terminal amino acids from various peptides. This chain is Probable cytosol aminopeptidase, found in Acidovorax sp. (strain JS42).